The chain runs to 348 residues: Heat-inducible transcription repressor HrcA (348 aa).

Belongs to the HrcA family.

Negative regulator of class I heat shock genes (grpE-dnaK-dnaJ and groELS operons). Prevents heat-shock induction of these operons. The polypeptide is Heat-inducible transcription repressor HrcA (Thermodesulfovibrio yellowstonii (strain ATCC 51303 / DSM 11347 / YP87)).